Here is a 277-residue protein sequence, read N- to C-terminus: Undecaprenyl-diphosphatase (277 aa).

The next 6 helical transmembrane spans lie at 44 to 64, 86 to 106, 110 to 130, 184 to 204, 215 to 235, and 250 to 270; these read RAMAFNIIIQLAAILAVVWEF, GNLLLAFMPAVVLGVLFADLI, LFNPVTVAAALVVGGVIMLWA, AATEFSFFLAMPTMVGAAVYS, GDLPVFALGFVTSFIFAMIAV, and FAWYRIVFGLFILATWQFGWV.

It belongs to the UppP family.

The protein localises to the cell inner membrane. It catalyses the reaction di-trans,octa-cis-undecaprenyl diphosphate + H2O = di-trans,octa-cis-undecaprenyl phosphate + phosphate + H(+). Its function is as follows. Catalyzes the dephosphorylation of undecaprenyl diphosphate (UPP). Confers resistance to bacitracin. The chain is Undecaprenyl-diphosphatase from Pseudomonas putida (strain ATCC 47054 / DSM 6125 / CFBP 8728 / NCIMB 11950 / KT2440).